The chain runs to 83 residues: NADH dehydrogenase [ubiquinone] iron-sulfur protein 5-B (83 aa).

The region spanning 11–52 (KGRCYDFWMDFSECMSHCREPKDCTLLREDYLECLHHSKEFQ) is the CHCH domain. 2 consecutive short sequence motifs (cx9C motif) follow at residues 14–24 (CYDFWMDFSEC) and 34–44 (CTLLREDYLEC). Disulfide bonds link Cys-14-Cys-44 and Cys-24-Cys-34. The disordered stretch occupies residues 62–83 (QRKLRAASRKGEETGDGTHTHH).

It belongs to the complex I NDUFS5 subunit family. In terms of assembly, complex I is composed of at least 49 different subunits. This is a component of the iron-sulfur (IP) fragment of the enzyme.

The protein resides in the mitochondrion. The protein localises to the mitochondrion inner membrane. Its subcellular location is the mitochondrion intermembrane space. In terms of biological role, accessory subunit of the mitochondrial membrane respiratory chain NADH dehydrogenase (Complex I), that is believed not to be involved in catalysis. Complex I functions in the transfer of electrons from NADH to the respiratory chain. The immediate electron acceptor for the enzyme is believed to be ubiquinone. The protein is NADH dehydrogenase [ubiquinone] iron-sulfur protein 5-B of Arabidopsis thaliana (Mouse-ear cress).